Reading from the N-terminus, the 157-residue chain is MAEKNERAIKVVAENRKARFNYAIEDTVEAGIALTGTEVKSVRNGKTTIAESYADSKNGEIWLINANIPEYLQANRFNHEPKRPRKLLLHRKQINKLLGAVDREGMTLIPLKLYFNERGRAKLLLAVAKGKKLHDKRESEKKRDWGREKGRLLRARG.

Residues 134-157 (HDKRESEKKRDWGREKGRLLRARG) form a disordered region. The span at 135 to 151 (DKRESEKKRDWGREKGR) shows a compositional bias: basic and acidic residues.

Belongs to the SmpB family.

It is found in the cytoplasm. Its function is as follows. Required for rescue of stalled ribosomes mediated by trans-translation. Binds to transfer-messenger RNA (tmRNA), required for stable association of tmRNA with ribosomes. tmRNA and SmpB together mimic tRNA shape, replacing the anticodon stem-loop with SmpB. tmRNA is encoded by the ssrA gene; the 2 termini fold to resemble tRNA(Ala) and it encodes a 'tag peptide', a short internal open reading frame. During trans-translation Ala-aminoacylated tmRNA acts like a tRNA, entering the A-site of stalled ribosomes, displacing the stalled mRNA. The ribosome then switches to translate the ORF on the tmRNA; the nascent peptide is terminated with the 'tag peptide' encoded by the tmRNA and targeted for degradation. The ribosome is freed to recommence translation, which seems to be the essential function of trans-translation. The protein is SsrA-binding protein of Nitrobacter hamburgensis (strain DSM 10229 / NCIMB 13809 / X14).